A 341-amino-acid polypeptide reads, in one-letter code: Adhesion protein Bd37 (341 aa).

Residues 1 to 21 form the signal peptide; sequence MKTSKILNTAAICLLAMGFNG. 2 N-linked (GlcNAc...) asparagine glycosylation sites follow: asparagine 23 and asparagine 30. Residues cysteine 26 and cysteine 307 are joined by a disulfide bond. A disordered region spans residues 36–75; the sequence is AAANPVVSTPGNDAQQAGTQQGGANSKSVPEQQPQQAAGE. Positions 49-59 are enriched in low complexity; it reads AQQAGTQQGGA. The segment covering 60 to 75 has biased composition (polar residues); it reads NSKSVPEQQPQQAAGE. The GPI-anchor amidated serine moiety is linked to residue serine 311. The propeptide at 312 to 341 is removed in mature form; sequence GQGSSPKKPSFAAVPSSLSAIVFGIIVSMF.

Post-translationally, the signal sequence is cleaved. Glycosylated. In terms of processing, palmitoylated. Post-translationally, not myristoylated.

Its subcellular location is the cell membrane. The protein localises to the secreted. The protein resides in the vesicle. Functionally, binds to host erythrocytes. The chain is Adhesion protein Bd37 from Babesia divergens.